Consider the following 544-residue polypeptide: CTP synthase (544 aa).

An amidoligase domain region spans residues 1 to 265 (MTKFIFVTGG…DNIITEQLQL (265 aa)). Serine 13 serves as a coordination point for CTP. Serine 13 contributes to the UTP binding site. Residues 14–19 (SLGKGI) and aspartate 71 contribute to the ATP site. Mg(2+) is bound by residues aspartate 71 and glutamate 139. CTP is bound by residues 146 to 148 (DIE), 186 to 191 (KTKPTQ), and lysine 222. Residues 186–191 (KTKPTQ) and lysine 222 each bind UTP. Positions 290-544 (KIAMVGKYVD…VKAALNNKKA (255 aa)) constitute a Glutamine amidotransferase type-1 domain. Glycine 353 contributes to the L-glutamine binding site. The Nucleophile; for glutamine hydrolysis role is filled by cysteine 380. Residues 381–384 (LGMQ), glutamate 404, and arginine 471 each bind L-glutamine. Catalysis depends on residues histidine 517 and glutamate 519.

The protein belongs to the CTP synthase family. In terms of assembly, homotetramer.

The catalysed reaction is UTP + L-glutamine + ATP + H2O = CTP + L-glutamate + ADP + phosphate + 2 H(+). It carries out the reaction L-glutamine + H2O = L-glutamate + NH4(+). The enzyme catalyses UTP + NH4(+) + ATP = CTP + ADP + phosphate + 2 H(+). It participates in pyrimidine metabolism; CTP biosynthesis via de novo pathway; CTP from UDP: step 2/2. Its activity is regulated as follows. Allosterically activated by GTP, when glutamine is the substrate; GTP has no effect on the reaction when ammonia is the substrate. The allosteric effector GTP functions by stabilizing the protein conformation that binds the tetrahedral intermediate(s) formed during glutamine hydrolysis. Inhibited by the product CTP, via allosteric rather than competitive inhibition. Functionally, catalyzes the ATP-dependent amination of UTP to CTP with either L-glutamine or ammonia as the source of nitrogen. Regulates intracellular CTP levels through interactions with the four ribonucleotide triphosphates. The chain is CTP synthase from Neisseria meningitidis serogroup C / serotype 2a (strain ATCC 700532 / DSM 15464 / FAM18).